The chain runs to 729 residues: Fatty acid oxidation complex subunit alpha (729 aa).

The segment at 1–189 is enoyl-CoA hydratase/isomerase; the sequence is MLYKGDTLYL…KIGLVDGVVK (189 aa). Residue Asp296 participates in substrate binding. The tract at residues 311–729 is 3-hydroxyacyl-CoA dehydrogenase; it reads ETPKQAAVLG…ARPVGDLKTA (419 aa). NAD(+) contacts are provided by residues Met324, Asp343, 400-402, Lys407, and Ser429; that span reads VVE. The active-site For 3-hydroxyacyl-CoA dehydrogenase activity is His450. NAD(+) is bound at residue Asn453. 2 residues coordinate substrate: Asn500 and Tyr660. The tract at residues 708-729 is disordered; it reads RHNEPYYPPVEPARPVGDLKTA.

This sequence in the N-terminal section; belongs to the enoyl-CoA hydratase/isomerase family. In the C-terminal section; belongs to the 3-hydroxyacyl-CoA dehydrogenase family. In terms of assembly, heterotetramer of two alpha chains (FadB) and two beta chains (FadA).

It carries out the reaction a (3S)-3-hydroxyacyl-CoA + NAD(+) = a 3-oxoacyl-CoA + NADH + H(+). It catalyses the reaction a (3S)-3-hydroxyacyl-CoA = a (2E)-enoyl-CoA + H2O. The enzyme catalyses a 4-saturated-(3S)-3-hydroxyacyl-CoA = a (3E)-enoyl-CoA + H2O. The catalysed reaction is (3S)-3-hydroxybutanoyl-CoA = (3R)-3-hydroxybutanoyl-CoA. It carries out the reaction a (3Z)-enoyl-CoA = a 4-saturated (2E)-enoyl-CoA. It catalyses the reaction a (3E)-enoyl-CoA = a 4-saturated (2E)-enoyl-CoA. It functions in the pathway lipid metabolism; fatty acid beta-oxidation. Involved in the aerobic and anaerobic degradation of long-chain fatty acids via beta-oxidation cycle. Catalyzes the formation of 3-oxoacyl-CoA from enoyl-CoA via L-3-hydroxyacyl-CoA. It can also use D-3-hydroxyacyl-CoA and cis-3-enoyl-CoA as substrate. The chain is Fatty acid oxidation complex subunit alpha from Escherichia coli O8 (strain IAI1).